Consider the following 529-residue polypeptide: UDP-glucuronosyltransferase 2B11 (529 aa).

Positions 1–21 (MTLKWTSVLLLIHLSCYFSSG) are cleaved as a signal peptide. An N6-succinyllysine modification is found at Lys135. Asn315 carries N-linked (GlcNAc...) asparagine glycosylation. A helical membrane pass occupies residues 493–513 (VIGFLLACVATVIFIITKFCL).

Belongs to the UDP-glycosyltransferase family. As to expression, widely expressed.

It is found in the microsome membrane. It localises to the endoplasmic reticulum membrane. It catalyses the reaction glucuronate acceptor + UDP-alpha-D-glucuronate = acceptor beta-D-glucuronoside + UDP + H(+). Functionally, UDPGT is of major importance in the conjugation and subsequent elimination of potentially toxic xenobiotics and endogenous compounds. This chain is UDP-glucuronosyltransferase 2B11 (UGT2B11), found in Homo sapiens (Human).